We begin with the raw amino-acid sequence, 615 residues long: Elongation factor 4 (615 aa).

One can recognise a tr-type G domain in the interval 14–200; sequence QQIRNFCIIA…KVAELIPAPT (187 aa). GTP is bound by residues 26–31 and 147–150; these read DHGKST and NKID.

Belongs to the TRAFAC class translation factor GTPase superfamily. Classic translation factor GTPase family. LepA subfamily.

It localises to the cell membrane. The catalysed reaction is GTP + H2O = GDP + phosphate + H(+). Functionally, required for accurate and efficient protein synthesis under certain stress conditions. May act as a fidelity factor of the translation reaction, by catalyzing a one-codon backward translocation of tRNAs on improperly translocated ribosomes. Back-translocation proceeds from a post-translocation (POST) complex to a pre-translocation (PRE) complex, thus giving elongation factor G a second chance to translocate the tRNAs correctly. Binds to ribosomes in a GTP-dependent manner. The sequence is that of Elongation factor 4 from Corynebacterium diphtheriae (strain ATCC 700971 / NCTC 13129 / Biotype gravis).